The sequence spans 1201 residues: Autophagy-related protein 11 (1201 aa).

A disordered region spans residues 90-109 (FPFLGRPSTPTKGSDNSTGT). Residues 97 to 109 (STPTKGSDNSTGT) show a composition bias toward polar residues. Residues 418–452 (LLRSDDMVRSLRDEKSKLEEKVKGSESRIRKLEDL) are a coiled coil. Disordered stretches follow at residues 458–503 (HMGR…SEEK) and 525–545 (KLQKDAHAERQSNTDKIQEVQ). The span at 485-499 (RRSSVSSRRMSSNQS) shows a compositional bias: low complexity. The segment covering 525 to 542 (KLQKDAHAERQSNTDKIQ) has biased composition (basic and acidic residues). Coiled coils occupy residues 566 to 670 (RRFL…ALQA) and 710 to 828 (SAKA…WKER). Disordered regions lie at residues 1052–1076 (SMNGANPDRRSIGEASDGTSFDDEN) and 1115–1201 (DARG…LQGP). The segment covering 1133 to 1166 (RTLSKSLDSRRNSSNSKKGPATPSQRGNDSTTDL) has biased composition (polar residues). Residues 1191 to 1201 (EEVRRDQLQGP) show a composition bias toward basic and acidic residues.

It belongs to the ATG11 family. In terms of assembly, homodimer and potential homooligomers.

The protein resides in the preautophagosomal structure membrane. In terms of biological role, selective autophagy-specific protein required for pexophagy and mitophagy. In contrast to its Saccharomyces cerevisiae ATG11 ortholog, is not involved in non-selective autophagy nor in cytoplasm to vacuole transport (Cvt). In Aspergillus oryzae (strain ATCC 42149 / RIB 40) (Yellow koji mold), this protein is Autophagy-related protein 11.